We begin with the raw amino-acid sequence, 389 residues long: D-alanine--D-alanine ligase (389 aa).

A compositionally biased stretch (polar residues) spans 1–12 (MSTENLPQNPEQ). Residues 1 to 22 (MSTENLPQNPEQSPRRPPRKPR) are disordered. The ATP-grasp domain occupies 169 to 379 (KAVFTSYGLK…YPELVDRLVQ (211 aa)). 205–260 (AGEHGWPLFVKPARAGSSIGITKVDDLAGLDEAIEEARRHDPKILVEAALRGREIE) contacts ATP. Residues aspartate 333, glutamate 346, and asparagine 348 each coordinate Mg(2+).

This sequence belongs to the D-alanine--D-alanine ligase family. It depends on Mg(2+) as a cofactor. Mn(2+) serves as cofactor.

The protein localises to the cytoplasm. The catalysed reaction is 2 D-alanine + ATP = D-alanyl-D-alanine + ADP + phosphate + H(+). Its pathway is cell wall biogenesis; peptidoglycan biosynthesis. Its function is as follows. Cell wall formation. The chain is D-alanine--D-alanine ligase (ddl) from Streptomyces coelicolor (strain ATCC BAA-471 / A3(2) / M145).